The following is a 167-amino-acid chain: Transcription initiation factor TFIID subunit 10 (167 aa).

2 disordered regions span residues 1 to 56 (MASD…EESE) and 119 to 139 (TTNI…NPKD). Acidic residues predominate over residues 41–56 (EQPDVEEVPLTTEESE). The span at 130-139 (SSKDKKNPKD) shows a compositional bias: basic and acidic residues.

It belongs to the TAF10 family. In terms of assembly, belongs to the TFIID complex which is composed of TATA binding protein (Tbp) and a number of TBP-associated factors (TAFs). Also a member of the histone acetylase (HAT) complex. At embryonic stage 9, highest expression is detected within the ectoderm, ventral chord, and anterior foregut primordium. Later in development preferential expression is in the foregut, proventriculus, and central nervous system. Coexpressed with Taf10b in the lateral epidermis and anal plate.

It localises to the cytoplasm. The protein localises to the nucleus. Its function is as follows. TFIID is a multimeric protein complex that plays a central role in mediating promoter responses to various activators and repressors. In Drosophila melanogaster (Fruit fly), this protein is Transcription initiation factor TFIID subunit 10.